We begin with the raw amino-acid sequence, 335 residues long: NAC domain-containing protein 60 (335 aa).

Positions 14–156 (TFPGFKFSPT…ALVICRLRRN (143 aa)) constitute an NAC domain. A DNA-binding region spans residues 112-162 (IGTKRTLVFHIGRAPKGGRTEWLMHEYCMIGVSLDALVICRLRRNTEFQGS). A helical membrane pass occupies residues 315-335 (ARWDVVVWLLVMIAVLVFYLV).

In terms of tissue distribution, expressed in roots, rosette leaves, cauline leaves, shoot apex, stems and flowers.

The protein localises to the membrane. The protein resides in the nucleus. Its function is as follows. Transcriptional activator activated by proteolytic cleavage through regulated intramembrane proteolysis (RIP). Transcription factor involved in modulation of abscisic acid (ABA) signaling. Attenuates ABA sensitivity and glucose-induced ABA accumulation. Reduces the expression of ABI4 gene. The chain is NAC domain-containing protein 60 from Arabidopsis thaliana (Mouse-ear cress).